The following is a 447-amino-acid chain: Na(+)-translocating NADH-quinone reductase subunit A (447 aa).

It belongs to the NqrA family. In terms of assembly, composed of six subunits; NqrA, NqrB, NqrC, NqrD, NqrE and NqrF.

It carries out the reaction a ubiquinone + n Na(+)(in) + NADH + H(+) = a ubiquinol + n Na(+)(out) + NAD(+). In terms of biological role, NQR complex catalyzes the reduction of ubiquinone-1 to ubiquinol by two successive reactions, coupled with the transport of Na(+) ions from the cytoplasm to the periplasm. NqrA to NqrE are probably involved in the second step, the conversion of ubisemiquinone to ubiquinol. The polypeptide is Na(+)-translocating NADH-quinone reductase subunit A (Klebsiella pneumoniae subsp. pneumoniae (strain ATCC 700721 / MGH 78578)).